The following is a 202-amino-acid chain: Na(+)-translocating NADH-quinone reductase subunit E (202 aa).

6 helical membrane-spanning segments follow: residues 5 to 25 (VSLFITSVFIENMALAYFLGM), 35 to 55 (VSTAIGLGVAVIVVMSITVPL), 81 to 101 (FLGLLSYIALIAATVQILEMF), 114 to 134 (GVFLPLITVNCAIMGGVLFMV), 144 to 164 (LTYGVGAGFGWALAIALLAGI), and 180 to 200 (LGITFITVGLMSLGFMSFGGM).

Belongs to the NqrDE/RnfAE family. As to quaternary structure, composed of six subunits; NqrA, NqrB, NqrC, NqrD, NqrE and NqrF.

It localises to the cell inner membrane. The enzyme catalyses a ubiquinone + n Na(+)(in) + NADH + H(+) = a ubiquinol + n Na(+)(out) + NAD(+). In terms of biological role, NQR complex catalyzes the reduction of ubiquinone-1 to ubiquinol by two successive reactions, coupled with the transport of Na(+) ions from the cytoplasm to the periplasm. NqrA to NqrE are probably involved in the second step, the conversion of ubisemiquinone to ubiquinol. This is Na(+)-translocating NADH-quinone reductase subunit E from Psychrobacter sp. (strain PRwf-1).